Here is a 134-residue protein sequence, read N- to C-terminus: MEIKKLYECTVIINGGLEDDAIAATMDEVRNVIAKNGGDIENVLEVGRRTMAYPIGKQTIGSYAHIEFRGEPSGLAAIETAFRYNENILRFLIVHLSTPLLEMRKRVEKYSVVIGSPEDQSEEDQQEESVAAKK.

The protein belongs to the bacterial ribosomal protein bS6 family.

Functionally, binds together with bS18 to 16S ribosomal RNA. This chain is Small ribosomal subunit protein bS6, found in Chlorobium phaeobacteroides (strain BS1).